Consider the following 195-residue polypeptide: dITP/XTP pyrophosphatase (195 aa).

Residue 8 to 13 coordinates substrate; sequence SNNQGK. 2 residues coordinate Mg(2+): Glu-39 and Asp-68. Residue Asp-68 is the Proton acceptor of the active site. Residues Ser-69, 149–152, Lys-172, and 177–178 contribute to the substrate site; these read FGYD and HR.

Belongs to the HAM1 NTPase family. Homodimer. Mg(2+) serves as cofactor.

It carries out the reaction XTP + H2O = XMP + diphosphate + H(+). The enzyme catalyses dITP + H2O = dIMP + diphosphate + H(+). It catalyses the reaction ITP + H2O = IMP + diphosphate + H(+). Functionally, pyrophosphatase that catalyzes the hydrolysis of nucleoside triphosphates to their monophosphate derivatives, with a high preference for the non-canonical purine nucleotides XTP (xanthosine triphosphate), dITP (deoxyinosine triphosphate) and ITP. Seems to function as a house-cleaning enzyme that removes non-canonical purine nucleotides from the nucleotide pool, thus preventing their incorporation into DNA/RNA and avoiding chromosomal lesions. The sequence is that of dITP/XTP pyrophosphatase from Staphylococcus aureus (strain Mu50 / ATCC 700699).